The sequence spans 348 residues: Protein-glutamate methylesterase/protein-glutamine glutaminase 5 (348 aa).

The Response regulatory domain maps to 8–125; sequence RVLVVDDSAF…TERLYELGGE (118 aa). 4-aspartylphosphate is present on D59. Residues 157 to 348 enclose the CheB-type methylesterase domain; it reads RAAAKSLVVV…MLALLRRHVR (192 aa). Residues S169, H196, and D292 contribute to the active site.

This sequence belongs to the CheB family. Phosphorylated by CheA. Phosphorylation of the N-terminal regulatory domain activates the methylesterase activity.

It is found in the cytoplasm. The catalysed reaction is [protein]-L-glutamate 5-O-methyl ester + H2O = L-glutamyl-[protein] + methanol + H(+). It catalyses the reaction L-glutaminyl-[protein] + H2O = L-glutamyl-[protein] + NH4(+). In terms of biological role, involved in chemotaxis. Part of a chemotaxis signal transduction system that modulates chemotaxis in response to various stimuli. Catalyzes the demethylation of specific methylglutamate residues introduced into the chemoreceptors (methyl-accepting chemotaxis proteins or MCP) by CheR. Also mediates the irreversible deamidation of specific glutamine residues to glutamic acid. The protein is Protein-glutamate methylesterase/protein-glutamine glutaminase 5 of Myxococcus xanthus (strain DK1622).